Here is a 1268-residue protein sequence, read N- to C-terminus: Protein transport protein Sec24B (1268 aa).

Composition is skewed to low complexity over residues 1-14 and 21-48; these read MSAP…AASA and GGAA…GPAQ. Disordered stretches follow at residues 1-71, 216-263, 303-345, and 362-451; these read MSAP…SGHY, APTV…LTWS, QNVQ…SVTQ, and NNQA…VVPQ. S2 is subject to N-acetylserine. Position 55 is a phosphoserine (S55). Residues 225 to 234 show a composition bias toward polar residues; sequence NSFSGQNTAI. Composition is skewed to low complexity over residues 245–255, 311–332, and 365–375; these read SQQHHQQQSLS, SPVV…TPPT, and ASSAPTPLSST. A Phosphothreonine modification is found at T329. Positions 376–389 are enriched in acidic residues; it reads SDDEEEEEEDEEAG. Residues 426–450 show a composition bias toward pro residues; sequence APDPAPEPDPASAPAPASAPAPVVP. Zn(2+) contacts are provided by C605, C608, C626, and C629. Residues 605-629 are zinc finger-like; that stretch reads CRSCRTYINPFVSFIDQRRWKCNLC. A Gelsolin-like repeat occupies 1141-1213; the sequence is PQPPLQKLSA…TLSSERARSF (73 aa). The residue at position 1224 (S1224) is a Phosphoserine.

Belongs to the SEC23/SEC24 family. SEC24 subfamily. As to quaternary structure, COPII is composed of at least five proteins: the Sec23/24 complex, the Sec13/31 complex and SAR1. Interacts with STING1; promoting STING1 translocation to COPII vesicles in a STEEP1-dependent manner. Interacts with RNF139. Interacts with TMED2 and TMED10. Interacts with CNIH4.

It localises to the cytoplasmic vesicle. The protein resides in the COPII-coated vesicle membrane. Its subcellular location is the endoplasmic reticulum membrane. It is found in the cytoplasm. The protein localises to the cytosol. Functionally, component of the coat protein complex II (COPII) which promotes the formation of transport vesicles from the endoplasmic reticulum (ER). The coat has two main functions, the physical deformation of the endoplasmic reticulum membrane into vesicles and the selection of cargo molecules for their transport to the Golgi complex. Plays a central role in cargo selection within the COPII complex and together with SEC24A may have a different specificity compared to SEC24C and SEC24D. May package preferentially cargos with cytoplasmic DxE or LxxLE motifs and may also recognize conformational epitopes. The protein is Protein transport protein Sec24B of Homo sapiens (Human).